The primary structure comprises 953 residues: MLSKLLRLGEGRMVKRLRKVADYVNALSDDVEKLSDAELRAKTEEFKKRVADGEDLDDLLPEAFAVAREAAWRVLNQRHFDVQVMGGAALHFGNVAEMKTGEGKTLTAVLPSYLNALSGKGVHVVTVNDYLARRDSEWMGRVHRFLGLDVGVILSGMTPDERRAAYAADITYGTNNEFGFDYLRDNMAHSVDDMVQRGHNFAIVDEVDSILIDEARTPLIISGPADGASHWYQEFARIVPMMEKDVHYEVDLRKRTVGVHELGVEFVEDQLGIDNLYEAANSPLVSYLNNALKAKELFQRDKDYIVRNGEVLIVDEFTGRVLMGRRYNEGMHQAIEAKERVEIKAENQTLATITLQNYFRLYDKLSGMTGTAETEAAELHEIYKLGVVPIPTNKPMVRQDQSDLIYKTEEAKFLAVVDDVAERHAKGQPVLIGTTSVERSEYLSKMLTKRRVPHNVLNAKYHEQEANIIAEAGRRGAVTVATNMAGRGTDIVLGGNVDFLADKRLRERGLDPVETPEEYEAAWHEVLPQVKAECAKEAEQVIEAGGLYVLGTERHESRRIDNQLRGRSGRQGDPGESRFYLSLGDELMRRFNGATLETLLTRLNLPDDVPIEAKMVSRAIKSAQTQVEQQNFEVRKNVLKYDEVMNQQRKVIYAERRRILEGENLAEQAHKMLVDVITAYVDGATAEGYAEDWDLETLWTALKTLYPVGIDHRDLIDSDAVGEPGELTREELLDALIKDAERAYAEREKQIEAIAGEGAMRQLERNVLLNVIDRKWREHLYEMDYLKEGIGLRAMAQRDPLVEYQREGYDMFVGMLEALKEESVGFLFNVQVEAAPQQPQVAPQAPPPTLSEFAAAAAAKASDSAAKPDSGSVATKERAEAERPAPALRAKGIDNEAPPLTYTGPSEDGTAQVQRSGNGGRHAAPAGGSRRERREAARKQAKADRPAKSHRKG.

ATP contacts are provided by residues glutamine 83, 101–105 (GEGKT), and aspartate 490. Residues 854–867 (AAAAAAKASDSAAK) show a composition bias toward low complexity. The interval 854–953 (AAAAAAKASD…DRPAKSHRKG (100 aa)) is disordered. The span at 929–947 (SRRERREAARKQAKADRPA) shows a compositional bias: basic and acidic residues.

This sequence belongs to the SecA family. In terms of assembly, monomer and homodimer. Part of the essential Sec protein translocation apparatus which comprises SecA, SecYEG and auxiliary proteins SecDF. Other proteins may also be involved.

The protein resides in the cell membrane. It is found in the cytoplasm. It catalyses the reaction ATP + H2O + cellular proteinSide 1 = ADP + phosphate + cellular proteinSide 2.. Functionally, part of the Sec protein translocase complex. Interacts with the SecYEG preprotein conducting channel. Has a central role in coupling the hydrolysis of ATP to the transfer of proteins into and across the cell membrane, serving as an ATP-driven molecular motor driving the stepwise translocation of polypeptide chains across the membrane. The sequence is that of Protein translocase subunit SecA 1 from Mycolicibacterium smegmatis (strain ATCC 700084 / mc(2)155) (Mycobacterium smegmatis).